A 360-amino-acid polypeptide reads, in one-letter code: Xanthohumol 4-O-methyltransferase (360 aa).

An S-adenosyl-L-methionine-binding site is contributed by aspartate 227. Histidine 266 (proton acceptor) is an active-site residue.

It belongs to the class I-like SAM-binding methyltransferase superfamily. Cation-independent O-methyltransferase family. In terms of assembly, homodimer. In terms of tissue distribution, highly expressed in lupulin glands. Detected in cones, male flowers and roots.

The protein localises to the cytoplasm. The catalysed reaction is xanthohumol + S-adenosyl-L-methionine = 4-O-methylxanthohumol + S-adenosyl-L-homocysteine + H(+). It carries out the reaction desmethylxanthohumol + S-adenosyl-L-methionine = xanthohumol + S-adenosyl-L-homocysteine + H(+). It catalyses the reaction isoliquiritigenin + S-adenosyl-L-methionine = 2'-O-methylisoliquiritigenin + S-adenosyl-L-homocysteine + H(+). The enzyme catalyses trans-resveratrol + S-adenosyl-L-methionine = 3-methoxy-4',5-dihydroxy-trans-stilbene + S-adenosyl-L-homocysteine + H(+). Its pathway is secondary metabolite biosynthesis. With respect to regulation, inhibited by S-adenosyl homocysteine. Functionally, involved in the biosynthesis of prenylated phenolics natural products which contribute to the bitter taste of beer and display broad biological activities. O-methyltransferase with a low substrate selectivity. Methylates chalconaringenin, desmethylxanthohumol, xanthohumol, isoliquiritigenin, butein, 2',4-dihydroxychalcone, resveratrol, genistein and guaiacol. Catalyzes the biosynthesis of 2',4'-dihydroxy-4,6'-dimethoxy-3'-prenylchalcone (4-O-methylxanthohumol). The chain is Xanthohumol 4-O-methyltransferase from Humulus lupulus (European hop).